An 83-amino-acid chain; its full sequence is Cytochrome b559 subunit alpha (83 aa).

The chain crosses the membrane as a helical span at residues valine 21–tryptophan 35. Histidine 23 is a binding site for heme.

It belongs to the PsbE/PsbF family. In terms of assembly, heterodimer of an alpha subunit and a beta subunit. PSII is composed of 1 copy each of membrane proteins PsbA, PsbB, PsbC, PsbD, PsbE, PsbF, PsbH, PsbI, PsbJ, PsbK, PsbL, PsbM, PsbT, PsbX, PsbY, PsbZ, Psb30/Ycf12, at least 3 peripheral proteins of the oxygen-evolving complex and a large number of cofactors. It forms dimeric complexes. Requires heme b as cofactor.

Its subcellular location is the plastid. The protein localises to the chloroplast thylakoid membrane. Functionally, this b-type cytochrome is tightly associated with the reaction center of photosystem II (PSII). PSII is a light-driven water:plastoquinone oxidoreductase that uses light energy to abstract electrons from H(2)O, generating O(2) and a proton gradient subsequently used for ATP formation. It consists of a core antenna complex that captures photons, and an electron transfer chain that converts photonic excitation into a charge separation. This chain is Cytochrome b559 subunit alpha, found in Panax ginseng (Korean ginseng).